Reading from the N-terminus, the 454-residue chain is Notoamide biosynthesis cluster protein M' (454 aa).

Residues Asn51 and Asn74 are each glycosylated (N-linked (GlcNAc...) asparagine). Over residues 205–219 (KARSKEKKPKRKKSK) the composition is skewed to basic residues. The segment at 205-224 (KARSKEKKPKRKKSKAEKEH) is disordered. Transmembrane regions (helical) follow at residues 334-354 (MTTV…SGLF) and 375-395 (FWMY…VWGV).

It is found in the membrane. In terms of biological role, part of the gene cluster that mediates the biosynthesis of notoamide, a fungal indole alkaloid that belongs to a family of natural products containing a characteristic bicyclo[2.2.2]diazaoctane core. The first step of notoamide biosynthesis involves coupling of L-proline and L-tryptophan by the bimodular NRPS notE', to produce cyclo-L-tryptophan-L-proline called brevianamide F. The reverse prenyltransferase notF' then acts as a deoxybrevianamide E synthase and converts brevianamide F to deoxybrevianamide E via reverse prenylation at C-2 of the indole ring leading to the bicyclo[2.2.2]diazaoctane core. Deoxybrevianamide E is further hydroxylated at C-6 of the indole ring, likely catalyzed by the cytochrome P450 monooxygenase notG', to yield 6-hydroxy-deoxybrevianamide E. 6-hydroxy-deoxybrevianamide E is a specific substrate of the prenyltransferase notC' for normal prenylation at C-7 to produce 6-hydroxy-7-prenyl-deoxybrevianamide, also called notoamide S. As the proposed pivotal branching point in notoamide biosynthesis, notoamide S can be diverted to notoamide E through an oxidative pyran ring closure putatively catalyzed by either notH' cytochrome P450 monooxygenase or the notD' FAD-linked oxidoreductase. This step would be followed by an indole 2,3-epoxidation-initiated pinacol-like rearrangement catalyzed by the notB' FAD-dependent monooxygenase leading to the formation of notoamide C and notoamide D. On the other hand notoamide S is converted to notoamide T by notH' (or notD'), a bifunctional oxidase that also functions as the intramolecular Diels-Alderase responsible for generation of (-)-notoamide T. To generate antipodal (+)-notoaminide T, notH (or notD) in Aspergillus strain MF297-2 is expected to catalyze a Diels-Alder reaction leading to the opposite stereochemistry. The remaining oxidoreductase notD' (or notH') likely catalyzes the oxidative pyran ring formation to yield (-)-stephacidin A. The FAD-dependent monooxygenase notI' is highly similar to notB' and is predicted to catalyze a similar conversion from (-)-stephacidin A to (+)-notoamide B via the 2,3-epoxidation of (-)-stephacidin A followed by a pinacol-type rearrangement. Finally, it remains unclear which enzyme could be responsible for the final hydroxylation steps leading to notoamide A and sclerotiamide. The function of notM' in the notoamide biosynthesis has not been determined yet. This is Notoamide biosynthesis cluster protein M' from Aspergillus versicolor.